We begin with the raw amino-acid sequence, 133 residues long: Small ribosomal subunit protein uS8 (133 aa).

This sequence belongs to the universal ribosomal protein uS8 family. In terms of assembly, part of the 30S ribosomal subunit. Contacts proteins S5 and S12.

One of the primary rRNA binding proteins, it binds directly to 16S rRNA central domain where it helps coordinate assembly of the platform of the 30S subunit. The polypeptide is Small ribosomal subunit protein uS8 (Koribacter versatilis (strain Ellin345)).